Consider the following 953-residue polypeptide: Isoleucine--tRNA ligase (953 aa).

Positions 58–68 (PYANGNIHLGH) match the 'HIGH' region motif. Glu-565 provides a ligand contact to L-isoleucyl-5'-AMP. The 'KMSKS' region signature appears at 606 to 610 (KMSKS). Lys-609 lines the ATP pocket. Cys-916, Cys-919, Cys-936, and Cys-939 together coordinate Zn(2+).

The protein belongs to the class-I aminoacyl-tRNA synthetase family. IleS type 1 subfamily. Monomer. The cofactor is Zn(2+).

The protein localises to the cytoplasm. It catalyses the reaction tRNA(Ile) + L-isoleucine + ATP = L-isoleucyl-tRNA(Ile) + AMP + diphosphate. Functionally, catalyzes the attachment of isoleucine to tRNA(Ile). As IleRS can inadvertently accommodate and process structurally similar amino acids such as valine, to avoid such errors it has two additional distinct tRNA(Ile)-dependent editing activities. One activity is designated as 'pretransfer' editing and involves the hydrolysis of activated Val-AMP. The other activity is designated 'posttransfer' editing and involves deacylation of mischarged Val-tRNA(Ile). The polypeptide is Isoleucine--tRNA ligase (Colwellia psychrerythraea (strain 34H / ATCC BAA-681) (Vibrio psychroerythus)).